The following is a 265-amino-acid chain: Putative methyltransferase 235L (265 aa).

An N-terminal signal peptide occupies residues 1–17 (MDICICYFFTILTTISC).

The protein belongs to the methyltransferase superfamily.

This is Putative methyltransferase 235L from Acheta domesticus (House cricket).